The following is a 416-amino-acid chain: 3-oxoacyl-[acyl-carrier-protein] synthase 2 (416 aa).

The 409-residue stretch at Lys6–Lys414 folds into the Ketosynthase family 3 (KS3) domain. Active-site for beta-ketoacyl synthase activity residues include Cys167, His307, and His344.

Belongs to the thiolase-like superfamily. Beta-ketoacyl-ACP synthases family. Homodimer.

It carries out the reaction a fatty acyl-[ACP] + malonyl-[ACP] + H(+) = a 3-oxoacyl-[ACP] + holo-[ACP] + CO2. The enzyme catalyses (9Z)-hexadecenoyl-[ACP] + malonyl-[ACP] + H(+) = 3-oxo-(11Z)-octadecenoyl-[ACP] + holo-[ACP] + CO2. It participates in lipid metabolism; fatty acid biosynthesis. Its function is as follows. Involved in the type II fatty acid elongation cycle. Catalyzes the elongation of a wide range of acyl-ACP by the addition of two carbons from malonyl-ACP to an acyl acceptor. Can efficiently catalyze the conversion of palmitoleoyl-ACP (cis-hexadec-9-enoyl-ACP) to cis-vaccenoyl-ACP (cis-octadec-11-enoyl-ACP), an essential step in the thermal regulation of fatty acid composition. This chain is 3-oxoacyl-[acyl-carrier-protein] synthase 2 (fabF), found in Synechocystis sp. (strain ATCC 27184 / PCC 6803 / Kazusa).